The chain runs to 442 residues: Putative amino acid transporter YuiF (442 aa).

The next 11 helical transmembrane spans lie at 21–41, 51–71, 103–123, 146–166, 190–210, 236–256, 259–279, 292–312, 335–355, 364–384, and 421–441; these read IVIALIIGALAGGLTGGLGLG, LGGNATVAVSYAMLGAFAAAL, LIVLIILIVSCFSQNVVPVHI, LIACVITFGLTAPYILLPVGF, IPYALIIPVAGMVVGLILSVI, IGIAVLAIVVSLGVQLYLSQT, VEGMIMGALAGLIVLFVSGVM, MVLMAFIGFVMLVAAGFSNVL, LGALLMLIVGLLITMGIGSSF, IFVPLCMQLGFSPMATIAIIG, and VPTFIFYNIPLVIFGWIAALV.

It localises to the cell membrane. In Bacillus subtilis (strain 168), this protein is Putative amino acid transporter YuiF (yuiF).